A 919-amino-acid polypeptide reads, in one-letter code: MLX-interacting protein (919 aa).

Residues 1-72 are disordered; sequence MAADVFMCSP…AGPGREEPPR (72 aa). An N-acetylalanine modification is found at A2. A phosphoserine mark is found at S9, S27, S33, and S39. The segment covering 27–37 has biased composition (acidic residues); it reads SEDDDDSDTDE. Residues 44 to 56 show a composition bias toward low complexity; the sequence is SGAATPARAHASA. The required for cytoplasmic localization stretch occupies residues 73-327; the sequence is RQQIIHSGHF…PLQPNLDFMD (255 aa). The tract at residues 322–445 is transactivation domain; the sequence is NLDFMDTFEP…LLSPSPAPPP (124 aa). Disordered stretches follow at residues 542-562 and 633-712; these read KPVSLTGGRPKQPHKIVPAPK and DLGH…SDPK. A Phosphoserine modification is found at S669. The span at 670 to 685 shows a compositional bias: polar residues; sequence PQVTVTGPSRDCPNSG. Residues 686-706 are compositionally biased toward low complexity; it reads QASPCASEQSPSPQSPQNNCS. The bHLH domain occupies 719–769; that stretch reads NRQMKHISAEQKRRFNIKMCFDMLNSLISNNSKLTSHAITLQKTVEYITKL. The leucine-zipper stretch occupies residues 769–790; the sequence is LQQERGQMQEEARRLREEIEEL. A mediates heterotypic interactions between MLXIP and MLX and is required for cytoplasmic localization region spans residues 832 to 881; the sequence is WKFWIFSIIIKPLFESFKGMVSTSSLEELHRTALSWLDQHCSLPILRPMV.

In terms of assembly, efficient DNA binding requires dimerization with another bHLH protein. Binds DNA as a homodimer or a heterodimer with MLX. In terms of tissue distribution, widely expressed in adult tissues. Most abundant in skeletal muscle.

Its subcellular location is the cytoplasm. It is found in the nucleus. The protein localises to the mitochondrion outer membrane. Functionally, binds DNA as a heterodimer with MLX and activates transcription. Binds to the canonical E box sequence 5'-CACGTG-3'. Plays a role in transcriptional activation of glycolytic target genes. Involved in glucose-responsive gene regulation. The chain is MLX-interacting protein from Homo sapiens (Human).